The chain runs to 405 residues: Tryptophan synthase beta chain (405 aa).

Residue Lys-95 is modified to N6-(pyridoxal phosphate)lysine.

The protein belongs to the TrpB family. In terms of assembly, tetramer of two alpha and two beta chains. It depends on pyridoxal 5'-phosphate as a cofactor.

The enzyme catalyses (1S,2R)-1-C-(indol-3-yl)glycerol 3-phosphate + L-serine = D-glyceraldehyde 3-phosphate + L-tryptophan + H2O. It participates in amino-acid biosynthesis; L-tryptophan biosynthesis; L-tryptophan from chorismate: step 5/5. In terms of biological role, the beta subunit is responsible for the synthesis of L-tryptophan from indole and L-serine. This Pseudomonas putida (Arthrobacter siderocapsulatus) protein is Tryptophan synthase beta chain (trpB).